Consider the following 115-residue polypeptide: Replication initiation control protein YabA (115 aa).

4 residues coordinate Zn(2+): histidine 90, cysteine 92, cysteine 106, and cysteine 109.

Belongs to the YabA family. As to quaternary structure, homotetramer. Interacts with both DnaA and DnaN, acting as a bridge between these two proteins. Zn(2+) serves as cofactor.

It localises to the cytoplasm. The protein localises to the nucleoid. Functionally, involved in control of chromosome replication initiation. Inhibits the cooperative binding of DnaA to the oriC region, thus negatively regulating initiation of chromosome replication. Inhibits the ability of DnaA-ATP to form a helix on DNA; does not disassemble preformed DnaA-DNA helices. Decreases the residence time of DnaA on the chromosome at its binding sites (oriC, replication forks and promoter-binding sites). Tethers DnaA to the replication machinery via the DNA polymerase beta sliding clamp subunit (dnaN). Associates with oriC and other DnaA targets on the chromosome in a DnaA-dependent manner. This is Replication initiation control protein YabA from Staphylococcus epidermidis (strain ATCC 35984 / DSM 28319 / BCRC 17069 / CCUG 31568 / BM 3577 / RP62A).